We begin with the raw amino-acid sequence, 215 residues long: Pyrrolidone-carboxylate peptidase (215 aa).

Residues Glu81, Cys144, and His168 contribute to the active site.

This sequence belongs to the peptidase C15 family. In terms of assembly, homotetramer.

The protein resides in the cytoplasm. It carries out the reaction Release of an N-terminal pyroglutamyl group from a polypeptide, the second amino acid generally not being Pro.. Functionally, removes 5-oxoproline from various penultimate amino acid residues except L-proline. In Bacillus velezensis (strain DSM 23117 / BGSC 10A6 / LMG 26770 / FZB42) (Bacillus amyloliquefaciens subsp. plantarum), this protein is Pyrrolidone-carboxylate peptidase.